We begin with the raw amino-acid sequence, 525 residues long: uncharacterized protein (525 aa).

The N-terminal stretch at 1-21 (MLECLSALLVLFAGGGGSVLA) is a signal peptide. Residues 22–448 (AVQSKTVADP…ISAASQLDKR (427 aa)) lie on the Extracellular side of the membrane. A disordered region spans residues 242–264 (KVSSENCSKDTDDKSGSKKERNT). A helical transmembrane segment spans residues 449-469 (IFIFTAITVSITTLMMLGFSY). The Cytoplasmic portion of the chain corresponds to 470 to 525 (RSRVSFRDHSIDDSDDDNDWSDDEVEFDEEYFYSLPVSIPEKGISLDKMAQQLGVE).

It is found in the membrane. This is an uncharacterized protein from Saccharomyces cerevisiae (strain YJM789) (Baker's yeast).